The chain runs to 402 residues: Multidrug resistance protein MdtH (402 aa).

Topologically, residues 1–12 are cytoplasmic; the sequence is MSRVSQARNLGK. A helical membrane pass occupies residues 13-33; sequence YFLLIDNMLVVLGFFVVFPLI. Residues 34 to 98 are Periplasmic-facing; it reads SIRFVDQMGW…GFATMGIAHE (65 aa). A helical transmembrane segment spans residues 99 to 116; it reads PWLLWFSCFLSGLGGTLF. At 117–138 the chain is on the cytoplasmic side; it reads DPPRSALVVKLIRPEQRGRFFS. The chain crosses the membrane as a helical span at residues 139–159; it reads LLMMQDSAGAVIGALLGSWLL. Over 160-164 the chain is Periplasmic; that stretch reads QYDFR. A helical transmembrane segment spans residues 165–185; that stretch reads LVCATGAILFILCALFNAWLL. The Cytoplasmic segment spans residues 186–213; the sequence is PAWKLSTARTPVREGMRRVMSNKRFVTY. Residues 214–234 form a helical membrane-spanning segment; the sequence is VLTLAGYYMLAVQVMLMLPIM. Over 235–243 the chain is Periplasmic; that stretch reads VNDIAGSPA. The chain crosses the membrane as a helical span at residues 244–264; that stretch reads AVKWMYAIEACLSLTLLYPIA. The Cytoplasmic portion of the chain corresponds to 265–276; the sequence is RWSEKRFRLEHR. Residues 277–297 traverse the membrane as a helical segment; sequence LMAGLLVMSLSMLPIGMVGNL. At 298-299 the chain is on the periplasmic side; the sequence is QQ. The helical transmembrane segment at 300–320 threads the bilayer; the sequence is LFTLICAFYIGSVIAEPARET. Residues 321-339 are Cytoplasmic-facing; it reads LSASPADARARGSYMGFSR. A helical transmembrane segment spans residues 340-360; the sequence is LGLAIGGAISYIGGGWLFDMG. At 361–367 the chain is on the periplasmic side; it reads KALAQPE. A helical membrane pass occupies residues 368–388; the sequence is LPWMMLGIIGFITFLALGWQF. Residues 389–402 lie on the Cytoplasmic side of the membrane; it reads SHKRTPRRMLEPGA.

This sequence belongs to the major facilitator superfamily. DHA1 family. MdtH (TC 2.A.1.2.21) subfamily.

It is found in the cell inner membrane. This chain is Multidrug resistance protein MdtH, found in Salmonella typhi.